Reading from the N-terminus, the 250-residue chain is Peroxiredoxin (250 aa).

Residues 6–163 form the Thioredoxin domain; it reads PLIGERFPEM…ILRIVKALKL (158 aa). The active-site Cysteine sulfenic acid (-SOH) intermediate is the cysteine 50. Arginine 126 serves as a coordination point for substrate. Cysteine 207 and cysteine 213 are oxidised to a cystine.

It belongs to the peroxiredoxin family. Prx6 subfamily. Homodecamer. Pentamer of dimers that assemble into a ring structure.

It is found in the cytoplasm. It catalyses the reaction a hydroperoxide + [thioredoxin]-dithiol = an alcohol + [thioredoxin]-disulfide + H2O. Functionally, thiol-specific peroxidase that catalyzes the reduction of hydrogen peroxide and organic hydroperoxides to water and alcohols, respectively. Plays a role in cell protection against oxidative stress by detoxifying peroxides. The sequence is that of Peroxiredoxin from Aeropyrum pernix (strain ATCC 700893 / DSM 11879 / JCM 9820 / NBRC 100138 / K1).